A 561-amino-acid chain; its full sequence is MTNPRHNIREIRSPRGPELNAKSWMTEAPLRMLMNNLDPDVAENPNELVVYGGIGRAARTWEDFDRIAATLKTLTEEETLLVQSGKPVGVFRTHKDAPRVLIANSNLVPHWATWDHFNELDKKGLAMYGQMTAGSWIYIGTQGIVQGTYETFVEAGRQHYNGSLKGKWILTGGLGGMGGAQPLAAVMAGACCLAVESDETRIDFRLRTRYVDEKATSLDEALAMIDKWTKAGEAKSVGLLGNAAEIFPELVKRMKAGGPRPDIVTDQTSAHDPLNGYLPLGWTVAEHKIKRESDPKAVEAAARASMKMHVEAMVAFWDAGVPTLDYGNNIRQVAKEEGFENAFAFPGFVPAYIRPLFCRGIGPFRWAALSGDPEDIYKTDAKVKELTPGNTHLHNWLDMARERIAFQGLPARICWVGLGDRERLGLAFNEMVKNGELKAPVVIGRDHLDSGSVASPNRETEAMKDGSDAVSDWPLLNALLNTASGATWVSLHHGGGVGMGFSQHSGMVICADGTDDAARRIERVLWNDPATGVMRHADAGYDIALDCAKDKGLRLPGILGN.

NAD(+) is bound by residues 52-53 (GG), Q130, 176-178 (GMG), E196, R201, 242-243 (NA), 267-271 (QTSAH), 277-278 (YL), and Y326. C414 is an active-site residue. G496 serves as a coordination point for NAD(+).

Belongs to the urocanase family. NAD(+) serves as cofactor.

The protein localises to the cytoplasm. The catalysed reaction is 4-imidazolone-5-propanoate = trans-urocanate + H2O. The protein operates within amino-acid degradation; L-histidine degradation into L-glutamate; N-formimidoyl-L-glutamate from L-histidine: step 2/3. In terms of biological role, catalyzes the conversion of urocanate to 4-imidazolone-5-propionate. The polypeptide is Urocanate hydratase (Rhizobium rhizogenes (strain K84 / ATCC BAA-868) (Agrobacterium radiobacter)).